The sequence spans 1024 residues: Error-prone DNA polymerase (1024 aa).

Belongs to the DNA polymerase type-C family. DnaE2 subfamily.

It is found in the cytoplasm. It catalyses the reaction DNA(n) + a 2'-deoxyribonucleoside 5'-triphosphate = DNA(n+1) + diphosphate. DNA polymerase involved in damage-induced mutagenesis and translesion synthesis (TLS). It is not the major replicative DNA polymerase. The sequence is that of Error-prone DNA polymerase from Vibrio campbellii (strain ATCC BAA-1116).